Reading from the N-terminus, the 124-residue chain is Non-specific lipid-transfer protein (124 aa).

The N-terminal stretch at 1-26 is a signal peptide; it reads MANSGVMKLVCLVLACMVVAAPLAEA. 4 disulfides stabilise this stretch: cysteine 30-cysteine 77, cysteine 40-cysteine 54, cysteine 55-cysteine 100, and cysteine 75-cysteine 114.

The protein belongs to the plant LTP family.

In terms of biological role, plant non-specific lipid-transfer proteins transfer phospholipids as well as galactolipids across membranes. May play a role in wax or cutin deposition in the cell walls of expanding epidermal cells and certain secretory tissues. The sequence is that of Non-specific lipid-transfer protein from Macadamia integrifolia (Macadamia nut).